A 245-amino-acid polypeptide reads, in one-letter code: Glycerophosphodiester phosphodiesterase (245 aa).

The GP-PDE domain occupies 2–241 (TKIFAHRGFK…DFPDRAVKIR (240 aa)). H7 functions as the Proton acceptor in the catalytic mechanism. A divalent metal cation-binding residues include E34 and D36. The Proton donor role is filled by H49. An a divalent metal cation-binding site is contributed by E110.

It belongs to the glycerophosphoryl diester phosphodiesterase family. Ni(2+) serves as cofactor. The cofactor is Co(2+). Mn(2+) is required as a cofactor.

It carries out the reaction a sn-glycero-3-phosphodiester + H2O = an alcohol + sn-glycerol 3-phosphate + H(+). Inhibited by EDTA and various organic solvents such as chloroform, toluene or benzene. Its function is as follows. Glycerophosphodiester phosphodiesterase hydrolyzes glycerophosphodiesters into glycerol-3-phosphate (G3P) and the corresponding alcohol. Can hydrolyze the model substrate bis-(p-nitrophenyl phosphate) (bis(pNPP)) to p-nitrophenol. Can also catalyze the degradation of diphenyl phosphate (DPHP) to phenyl phosphate (PHP). DPHP is an aryl phosphate ester used as a chemical additive and an industrial catalyst that can easily spread to the environment and exhibits toxicity toward organisms. The protein is Glycerophosphodiester phosphodiesterase of Bacillus altitudinis.